Reading from the N-terminus, the 29-residue chain is Potassium channel toxin alpha-KTx 20.1 (29 aa).

Disulfide bonds link C2–C20, C7–C24, and C11–C26.

Belongs to the short scorpion toxin superfamily. Potassium channel inhibitor family. Alpha-KTx 20 subfamily. In terms of tissue distribution, expressed by the venom gland.

Its subcellular location is the secreted. Reduces potassium currents through Kv1.2/KCNA2 and Kv1.3/KCNA3 voltage-gated potassium channels. The chain is Potassium channel toxin alpha-KTx 20.1 from Tityus trivittatus (Argentinean scorpion).